The sequence spans 101 residues: Large ribosomal subunit protein bL27 (101 aa).

The segment at 1 to 21 (MAHKKAGGSSRNGRDSRSKRL) is disordered.

The protein belongs to the bacterial ribosomal protein bL27 family.

This is Large ribosomal subunit protein bL27 from Buchnera aphidicola subsp. Cinara cedri (strain Cc).